The following is a 426-amino-acid chain: Tryptophan--tRNA ligase (426 aa).

A 'HIGH' region motif is present at residues 66-74 (PSGEMHLGN). Residues 314–318 (KMSSS) carry the 'KMSKS' region motif.

This sequence belongs to the class-I aminoacyl-tRNA synthetase family.

It is found in the cytoplasm. The catalysed reaction is tRNA(Trp) + L-tryptophan + ATP = L-tryptophyl-tRNA(Trp) + AMP + diphosphate + H(+). The polypeptide is Tryptophan--tRNA ligase (Thermoplasma volcanium (strain ATCC 51530 / DSM 4299 / JCM 9571 / NBRC 15438 / GSS1)).